A 228-amino-acid polypeptide reads, in one-letter code: Non-specific lipid-transfer protein EPAD1 (228 aa).

Positions 1–24 (MERSHLAVLLGLLAFAAGVPAAAA) are cleaved as a signal peptide. 3 cysteine pairs are disulfide-bonded: cysteine 40/cysteine 62, cysteine 63/cysteine 105, and cysteine 78/cysteine 119. An N-linked (GlcNAc...) asparagine glycan is attached at asparagine 94. The interval 124–207 (PPASIVTAPP…PPRSGASSSL (84 aa)) is disordered. Positions 145 to 162 (REAPPPPPAAEKLSPPPQ) are enriched in pro residues.

Belongs to the plant LTP family. In terms of tissue distribution, expressed in young panicles. Specifically expressed in pollen mother cells and young microspores.

It is found in the cell membrane. Functionally, plant non-specific lipid-transfer protein that binds phospholipids in vitro. Required for correct pollen exine patterning by controlling the continuity and homogeneity of the primexine distribution. The sequence is that of Non-specific lipid-transfer protein EPAD1 from Oryza sativa subsp. japonica (Rice).